Reading from the N-terminus, the 495-residue chain is UDP-N-acetylmuramoyl-L-alanyl-D-glutamate--2,6-diaminopimelate ligase (495 aa).

UDP-N-acetyl-alpha-D-muramoyl-L-alanyl-D-glutamate is bound by residues leucine 27, serine 29, and 44-46 (HQA). Residue 116-122 (GTNGKTT) participates in ATP binding. UDP-N-acetyl-alpha-D-muramoyl-L-alanyl-D-glutamate-binding positions include asparagine 157, 158–159 (TT), serine 185, glutamine 191, and arginine 193. Lysine 225 bears the N6-carboxylysine mark. Meso-2,6-diaminopimelate is bound by residues arginine 390, 414-417 (DNPR), glycine 465, and glutamate 469. A Meso-diaminopimelate recognition motif motif is present at residues 414–417 (DNPR).

Belongs to the MurCDEF family. MurE subfamily. Mg(2+) is required as a cofactor. Carboxylation is probably crucial for Mg(2+) binding and, consequently, for the gamma-phosphate positioning of ATP.

It is found in the cytoplasm. The catalysed reaction is UDP-N-acetyl-alpha-D-muramoyl-L-alanyl-D-glutamate + meso-2,6-diaminopimelate + ATP = UDP-N-acetyl-alpha-D-muramoyl-L-alanyl-gamma-D-glutamyl-meso-2,6-diaminopimelate + ADP + phosphate + H(+). Its pathway is cell wall biogenesis; peptidoglycan biosynthesis. Catalyzes the addition of meso-diaminopimelic acid to the nucleotide precursor UDP-N-acetylmuramoyl-L-alanyl-D-glutamate (UMAG) in the biosynthesis of bacterial cell-wall peptidoglycan. In Salmonella typhimurium (strain LT2 / SGSC1412 / ATCC 700720), this protein is UDP-N-acetylmuramoyl-L-alanyl-D-glutamate--2,6-diaminopimelate ligase.